The following is a 96-amino-acid chain: uncharacterized protein (96 aa).

3 helical membrane passes run 3-23 (KLTIFSGGLGAVFSVLAQLFA), 30-50 (TLGNLWFLGALAGIITMLASI), and 68-88 (IGLLGTGLVYIIPTLFNIIII).

The protein localises to the cell membrane. This is an uncharacterized protein from Bacillus subtilis (strain 168).